The following is a 276-amino-acid chain: Putative ripening-related protein 5 (276 aa).

The signal sequence occupies residues 1-18 (MAMIFLLAALSTTHLASS).

The protein belongs to the kiwellin family.

The protein resides in the secreted. In Oryza sativa subsp. japonica (Rice), this protein is Putative ripening-related protein 5.